We begin with the raw amino-acid sequence, 688 residues long: MSERRILVTSALPYANGPIHIGHMVEYIQTDIWVRFQRMRGHETYYVGADDTHGTPVMLRAEKEGITPRQLIERVWTEHKRDFDNFLVSFDNYYSTDSDENRELCERVYLKLKEAGLIDVREVEQFYDPVKEMFLPDRFIKGECPKCGAKDQYGDSCEVCGATYQPTDLKNPYSVVSGATPVRKSSEHYFFKLSDPRCETFLRDWVGDLAQPEATNKMREWLGDEGESTLSDWDISRDAPYFGFEIPGAPGKYFYVWLDAPVGYYASFKNLCGKLGLDFDAWVSTHSTAEQYHFIGKDILYFHTLFWPAMLQFSGHRTPTNVFAHGFLTVDGAKMSKSRGTFITAQSYIDTGLNPEWLRYYFAAKLNATMEDLDLNLDDFIARVNSDLVGKFVNIASRSAGFLVKRFEGRVNDAALANPLMVQLREAAPQIADLYEKREYSKALRTVMELADAVNAYVDTEKPWDLAKDEAQRDKLHAACSVALEAFRLLAVYLKPILPSTVARIEAFLNIEPLNWRAIDAQLSSARPIQPYSHLMTRVDKKQVDALLEANRQSLQATVDAVPAANGTPAVEPMAETIAIDDFAKIDLRVAKIVACQRVEGSNKLLQLTLDVGEGKTRNVFSGIQSAYAPEDLVGKLTVMVANLAPRKMKFGMSEGMVLAASAADEKAQPGLYILEPHAGAVPGMRVR.

The short motif at 13-23 is the 'HIGH' region element; that stretch reads PYANGPIHIGH. Zn(2+) is bound by residues Cys-144, Cys-147, Cys-157, and Cys-160. Positions 334 to 338 match the 'KMSKS' region motif; that stretch reads KMSKS. Lys-337 contributes to the ATP binding site. The tRNA-binding domain occupies 582–688; sequence DFAKIDLRVA…AGAVPGMRVR (107 aa).

Belongs to the class-I aminoacyl-tRNA synthetase family. MetG type 1 subfamily. As to quaternary structure, homodimer. Zn(2+) serves as cofactor.

Its subcellular location is the cytoplasm. It carries out the reaction tRNA(Met) + L-methionine + ATP = L-methionyl-tRNA(Met) + AMP + diphosphate. In terms of biological role, is required not only for elongation of protein synthesis but also for the initiation of all mRNA translation through initiator tRNA(fMet) aminoacylation. The polypeptide is Methionine--tRNA ligase (Ralstonia nicotianae (strain ATCC BAA-1114 / GMI1000) (Ralstonia solanacearum)).